Reading from the N-terminus, the 827-residue chain is Rho GTPase-activating protein 6 (827 aa).

Positions 18–125 constitute a PH domain; sequence TVYKSGPLFI…WKAALEQALA (108 aa). Residues 172 to 371 form the Rho-GAP domain; it reads LALEEIDGSP…ALLEDYGNMI (200 aa). Disordered stretches follow at residues 379 to 437 and 517 to 561; these read CSTS…SDYA and YTTS…SSGN. Positions 401–412 are enriched in basic and acidic residues; the sequence is IVVKHPDLHTLD. A compositionally biased stretch (acidic residues) spans 413 to 423; sequence IEEGETDDDND. Residues 517-543 show a composition bias toward polar residues; that stretch reads YTTSAEKPASKTTGSSTVNSKRSSSWG. Residues 560 to 684 are a coiled coil; the sequence is GNDELLIQRL…HQLSQQRQHH (125 aa).

Acts as a GTPase activator for the Rac-type GTPase by converting it to an inactive GDP-bound state. The polypeptide is Rho GTPase-activating protein 6 (ROPGAP6) (Arabidopsis thaliana (Mouse-ear cress)).